Here is a 384-residue protein sequence, read N- to C-terminus: Probable 2-heptyl-3-hydroxy-4(1H)-quinolone synthase AqdB2 (384 aa).

Belongs to the 3-hydroxybenzoate 6-hydroxylase family.

The catalysed reaction is 2-heptyl-4(1H)-quinolone + NADH + O2 + H(+) = 2-heptyl-3-hydroxy-4(1H)-quinolone + NAD(+) + H2O. In terms of biological role, involved in the degradation of the Pseudomonas aeruginosa quorum sensing signal molecule HHQ (2-heptyl-4-quinolone) to anthranilic acid. Probably catalyzes the hydroxylation of HHQ to PQS (2-heptyl-3-hydroxy-4-quinolone). The chain is Probable 2-heptyl-3-hydroxy-4(1H)-quinolone synthase AqdB2 from Rhodococcus erythropolis (Arthrobacter picolinophilus).